The following is a 631-amino-acid chain: Probable glutamate--tRNA ligase, cytoplasmic (631 aa).

139-141 is an L-glutamate binding site; it reads RFP. The 'HIGH' region motif lies at 144 to 153; sequence PSGFLHIGHI. An ATP-binding site is contributed by H149. L-glutamate contacts are provided by residues D173, 311–315, and R329; that span reads YDFAC. Residues E332 and 367–371 contribute to the ATP site; that span reads VLSKR. A 'KMSKS' region motif is present at residues 367 to 371; that stretch reads VLSKR.

This sequence belongs to the class-I aminoacyl-tRNA synthetase family. Glutamate--tRNA ligase type 2 subfamily.

It localises to the cytoplasm. The catalysed reaction is tRNA(Glu) + L-glutamate + ATP = L-glutamyl-tRNA(Glu) + AMP + diphosphate. This is Probable glutamate--tRNA ligase, cytoplasmic from Enterocytozoon bieneusi (strain H348) (Microsporidian parasite).